The primary structure comprises 310 residues: ADP-L-glycero-D-manno-heptose-6-epimerase (310 aa).

NADP(+) is bound by residues 10 to 11 (FI), 31 to 32 (DN), Lys38, Lys53, 75 to 79 (EGACS), and Asn92. The Proton acceptor role is filled by Tyr140. Lys144 is an NADP(+) binding site. Asn169 serves as a coordination point for substrate. Positions 170 and 178 each coordinate NADP(+). Lys178 serves as the catalytic Proton acceptor. Substrate-binding positions include Ser180, His187, 201-204 (FAGS), Arg209, and Tyr272.

The protein belongs to the NAD(P)-dependent epimerase/dehydratase family. HldD subfamily. Homopentamer. It depends on NADP(+) as a cofactor.

It catalyses the reaction ADP-D-glycero-beta-D-manno-heptose = ADP-L-glycero-beta-D-manno-heptose. Its pathway is nucleotide-sugar biosynthesis; ADP-L-glycero-beta-D-manno-heptose biosynthesis; ADP-L-glycero-beta-D-manno-heptose from D-glycero-beta-D-manno-heptose 7-phosphate: step 4/4. Its function is as follows. Catalyzes the interconversion between ADP-D-glycero-beta-D-manno-heptose and ADP-L-glycero-beta-D-manno-heptose via an epimerization at carbon 6 of the heptose. The protein is ADP-L-glycero-D-manno-heptose-6-epimerase of Yersinia pseudotuberculosis serotype O:1b (strain IP 31758).